The sequence spans 100 residues: Tetrahydromethanopterin S-methyltransferase subunit B (100 aa).

The helical transmembrane segment at 80 to 100 threads the bilayer; that stretch reads KLTNIVYGFILGLIILFALLL.

The protein belongs to the MtrB family. In terms of assembly, the complex is composed of 8 subunits; MtrA, MtrB, MtrC, MtrD, MtrE, MtrF, MtrG and MtrH.

The protein resides in the cell membrane. It carries out the reaction 5-methyl-5,6,7,8-tetrahydromethanopterin + coenzyme M + 2 Na(+)(in) = 5,6,7,8-tetrahydromethanopterin + methyl-coenzyme M + 2 Na(+)(out). It functions in the pathway one-carbon metabolism; methanogenesis from CO(2); methyl-coenzyme M from 5,10-methylene-5,6,7,8-tetrahydromethanopterin: step 2/2. Part of a complex that catalyzes the formation of methyl-coenzyme M and tetrahydromethanopterin from coenzyme M and methyl-tetrahydromethanopterin. This is an energy-conserving, sodium-ion translocating step. The polypeptide is Tetrahydromethanopterin S-methyltransferase subunit B (Methanothermobacter marburgensis (strain ATCC BAA-927 / DSM 2133 / JCM 14651 / NBRC 100331 / OCM 82 / Marburg) (Methanobacterium thermoautotrophicum)).